Here is a 193-residue protein sequence, read N- to C-terminus: Superoxide dismutase [Fe] (193 aa).

Residues His27, His74, Asp157, and His161 each coordinate Fe cation.

It belongs to the iron/manganese superoxide dismutase family. Homodimer. Fe cation is required as a cofactor.

The catalysed reaction is 2 superoxide + 2 H(+) = H2O2 + O2. Destroys superoxide anion radicals which are normally produced within the cells and which are toxic to biological systems. The polypeptide is Superoxide dismutase [Fe] (sodB) (Coxiella burnetii (strain RSA 493 / Nine Mile phase I)).